Consider the following 508-residue polypeptide: MTEPTQTQPAVAADENQIIAERRDKLRALREQGVAYPNDFRPTHHAAELQSTYADSDKAALEANPVEVSVAGRMMLKRVMGKASFATVQDGSGQIQFFVTPNDVGAETYDAFKKWDLGDIVAARGVLFRTNKGELSVQCKELRLLAKALRPLPDKFHGLADQEMRYRQRYVDLIVTPETRDTFRARTKTISSIRRFMENADFMEVETPMLHPIPGGAAAKPFITHHNALDMQMFLRIAPELYLKRLIVGGFERVFEINRNFRNEGVSPRHNPEFTMMEFYAAYTDYRWLMDFTEQLIRQAAIDALGTATIQYQGRELDLAKPFHRLTITQAIQKYAPQYTDGQLSDDAFLRTELKRLGVDVSQPAFLNAGIGALQLALFEETAESQLWEPTYIIDYPVEVSPLARASDTVPGITERFELFMTGREIANGFSELNDPEDQAARFKKQVEQKDAGDEEAMFFDADYIRALEHGMPPTGGCGIGIDRLVMLLTDSPTIRDVLLFPHLRRED.

2 residues coordinate Mg(2+): Glu418 and Glu425.

Belongs to the class-II aminoacyl-tRNA synthetase family. In terms of assembly, homodimer. The cofactor is Mg(2+).

It is found in the cytoplasm. It carries out the reaction tRNA(Lys) + L-lysine + ATP = L-lysyl-tRNA(Lys) + AMP + diphosphate. This chain is Lysine--tRNA ligase, found in Burkholderia vietnamiensis (strain G4 / LMG 22486) (Burkholderia cepacia (strain R1808)).